The following is a 653-amino-acid chain: DNA polymerase (653 aa).

It belongs to the DNA polymerase type-B family.

The catalysed reaction is DNA(n) + a 2'-deoxyribonucleoside 5'-triphosphate = DNA(n+1) + diphosphate. In terms of biological role, replicates viral genomic DNA. The polypeptide is DNA polymerase (Acidianus convivator (ABV)).